Consider the following 209-residue polypeptide: Large ribosomal subunit protein uL4 (209 aa).

Residues Gly-46–Arg-71 are disordered. Positions Ser-59–Arg-71 are enriched in basic residues.

Belongs to the universal ribosomal protein uL4 family. Part of the 50S ribosomal subunit.

In terms of biological role, one of the primary rRNA binding proteins, this protein initially binds near the 5'-end of the 23S rRNA. It is important during the early stages of 50S assembly. It makes multiple contacts with different domains of the 23S rRNA in the assembled 50S subunit and ribosome. Its function is as follows. Forms part of the polypeptide exit tunnel. This chain is Large ribosomal subunit protein uL4, found in Borreliella afzelii (strain PKo) (Borrelia afzelii).